A 379-amino-acid polypeptide reads, in one-letter code: (R)-2-hydroxyglutaryl-CoA dehydratase, subunit beta (379 aa).

This sequence belongs to the FldB/FldC dehydratase alpha/beta subunit family. In terms of assembly, the (R)-2-hydroxyglutaryl-CoA dehydratase enzyme system is a heterodimer composed of an alpha subunit (HgdA) and a beta subunit (HgdB). Requires [4Fe-4S] cluster as cofactor. FMN is required as a cofactor. Mg(2+) serves as cofactor.

The protein resides in the cytoplasm. The catalysed reaction is (R)-2-hydroxyglutaryl-CoA = (2E)-glutaconyl-CoA + H2O. Its pathway is amino-acid degradation; L-glutamate degradation via hydroxyglutarate pathway; crotonoyl-CoA from L-glutamate: step 4/5. Its activity is regulated as follows. Activated by the HgdC. Reversibly inactivated by oxidants such as 2-nitrophenol, 3-nitrophenol, 4-nitrophenol, 4-nitrobenzoate, carbonyl cyanide 4-(trifluoromethoxy)phenylhydrazone (FCCP) and chloramphenicol. Irreversibly inactivated by oxidants such as hydroxylamine and nitrite. Its function is as follows. Involved in the fermentation of L-glutamate via the hydroxyglutarate pathway. Catalyzes the reversible syn-elimination of water from (R)-2-hydroxyglutaryl-CoA to yield (E)-glutaconyl-CoA. The dehydration mechanism involves a transient one electron reduction of the thioester from (R)-2-hydroxyglutaryl-CoA, generating a ketyl radical. Prior to (E)-glutaconyl-CoA formation, the ketyl radical is subsequently reoxidized by electron transfer back to the HgdA-HgdB complex (CompD) to avoid change in oxidation state of the substrate. The appropriate redox state of dehydratase HgdA-HgdB complex (CompD) is maintained by HgdC (CompA) via hydrolysis of ATP and ATP-dependent electron transfer. Since the electron is recycled, the dehydratase is able to perform several turnovers with only catalytic amounts of ATP and substoichiometric amounts of HgdC (CompA). This Acidaminococcus fermentans (strain ATCC 25085 / DSM 20731 / CCUG 9996 / CIP 106432 / VR4) protein is (R)-2-hydroxyglutaryl-CoA dehydratase, subunit beta.